A 341-amino-acid chain; its full sequence is Diguanylate cyclase DgcP (341 aa).

A GAF domain is found at 18-154; that stretch reads SLESLVRQLL…LFAGLIAQYI (137 aa). Residues 204-337 enclose the GGDEF domain; sequence HKIMIAFIDL…KQKTPFVAHP (134 aa). Residue Asp212 participates in Mg(2+) binding. Positions 220, 225, and 229 each coordinate substrate. Position 255 (Asp255) interacts with Mg(2+). Asp255 (proton acceptor) is an active-site residue.

In terms of assembly, homodimer. The cofactor is Mg(2+).

It carries out the reaction 2 GTP = 3',3'-c-di-GMP + 2 diphosphate. Its pathway is purine metabolism; 3',5'-cyclic di-GMP biosynthesis. Its function is as follows. Catalyzes the synthesis of cyclic-di-GMP (c-di-GMP) via the condensation of 2 GTP molecules. Cyclic-di-GMP is a second messenger which controls cell surface-associated traits in bacteria. This chain is Diguanylate cyclase DgcP, found in Escherichia coli (strain K12).